We begin with the raw amino-acid sequence, 321 residues long: Ferredoxin--NADP reductase (321 aa).

FAD is bound by residues aspartate 34, glutamine 42, tyrosine 47, valine 87, phenylalanine 119, aspartate 278, and threonine 319.

Belongs to the ferredoxin--NADP reductase type 2 family. In terms of assembly, homodimer. FAD serves as cofactor.

It catalyses the reaction 2 reduced [2Fe-2S]-[ferredoxin] + NADP(+) + H(+) = 2 oxidized [2Fe-2S]-[ferredoxin] + NADPH. The polypeptide is Ferredoxin--NADP reductase (Streptococcus pneumoniae serotype 4 (strain ATCC BAA-334 / TIGR4)).